We begin with the raw amino-acid sequence, 381 residues long: Probable tRNA sulfurtransferase (381 aa).

Residues 60 to 168 (REATEVLTRV…EGKAYIFVDK (109 aa)) enclose the THUMP domain. ATP contacts are provided by residues 186–187 (LL), lysine 269, glycine 291, and glutamine 300.

This sequence belongs to the ThiI family.

It localises to the cytoplasm. It catalyses the reaction [ThiI sulfur-carrier protein]-S-sulfanyl-L-cysteine + a uridine in tRNA + 2 reduced [2Fe-2S]-[ferredoxin] + ATP + H(+) = [ThiI sulfur-carrier protein]-L-cysteine + a 4-thiouridine in tRNA + 2 oxidized [2Fe-2S]-[ferredoxin] + AMP + diphosphate. The enzyme catalyses [ThiS sulfur-carrier protein]-C-terminal Gly-Gly-AMP + S-sulfanyl-L-cysteinyl-[cysteine desulfurase] + AH2 = [ThiS sulfur-carrier protein]-C-terminal-Gly-aminoethanethioate + L-cysteinyl-[cysteine desulfurase] + A + AMP + 2 H(+). It participates in cofactor biosynthesis; thiamine diphosphate biosynthesis. In terms of biological role, catalyzes the ATP-dependent transfer of a sulfur to tRNA to produce 4-thiouridine in position 8 of tRNAs, which functions as a near-UV photosensor. Also catalyzes the transfer of sulfur to the sulfur carrier protein ThiS, forming ThiS-thiocarboxylate. This is a step in the synthesis of thiazole, in the thiamine biosynthesis pathway. The sulfur is donated as persulfide by IscS. This chain is Probable tRNA sulfurtransferase, found in Thermococcus kodakarensis (strain ATCC BAA-918 / JCM 12380 / KOD1) (Pyrococcus kodakaraensis (strain KOD1)).